The primary structure comprises 291 residues: Nucleotide-binding protein RALTA_A0325 (291 aa).

An ATP-binding site is contributed by 8–15; that stretch reads GISGSGKS. 57 to 60 is a GTP binding site; that stretch reads DIRS.

It belongs to the RapZ-like family.

Displays ATPase and GTPase activities. The chain is Nucleotide-binding protein RALTA_A0325 from Cupriavidus taiwanensis (strain DSM 17343 / BCRC 17206 / CCUG 44338 / CIP 107171 / LMG 19424 / R1) (Ralstonia taiwanensis (strain LMG 19424)).